The chain runs to 179 residues: 3-hydroxyanthranilate 3,4-dioxygenase (179 aa).

R47 contacts O2. The Fe cation site is built by H51, E57, and H96. E57 provides a ligand contact to substrate. Positions 100 and 110 each coordinate substrate. Fe cation is bound by residues C125, C128, C162, and C165.

It belongs to the 3-HAO family. Requires Fe(2+) as cofactor.

The catalysed reaction is 3-hydroxyanthranilate + O2 = (2Z,4Z)-2-amino-3-carboxymuconate 6-semialdehyde. The protein operates within cofactor biosynthesis; NAD(+) biosynthesis; quinolinate from L-kynurenine: step 3/3. In terms of biological role, catalyzes the oxidative ring opening of 3-hydroxyanthranilate to 2-amino-3-carboxymuconate semialdehyde, which spontaneously cyclizes to quinolinate. The chain is 3-hydroxyanthranilate 3,4-dioxygenase from Bacillus cereus (strain 03BB102).